Here is a 394-residue protein sequence, read N- to C-terminus: RAB6A-GEF complex partner protein 2 (394 aa).

It belongs to the RGP1 family. Forms a complex with RIC1; the interaction enhances RAB6A GTPase activity. Interacts with RIC1. Interacts with RAB6A; the interaction is direct with a preference for RAB6A-GDP. Interacts with RAB33B.

Its subcellular location is the cytoplasm. It localises to the cytosol. The protein resides in the membrane. Its function is as follows. The RIC1-RGP1 complex acts as a guanine nucleotide exchange factor (GEF), which activates RAB6A by exchanging bound GDP for free GTP and may thereby required for efficient fusion of endosome-derived vesicles with the Golgi compartment. The RIC1-RGP1 complex participates in the recycling of mannose-6-phosphate receptors. In Bos taurus (Bovine), this protein is RAB6A-GEF complex partner protein 2.